We begin with the raw amino-acid sequence, 545 residues long: Zinc finger protein with KRAB and SCAN domains 4 (545 aa).

The interval 1–22 (MAREPRKNAALDAQSAEDQTGL) is disordered. Glycyl lysine isopeptide (Lys-Gly) (interchain with G-Cter in SUMO2) cross-links involve residues Lys-26 and Lys-29. A disordered region spans residues 34–55 (ALTAEVRAPCSPARGPERSRQR). The SCAN box domain maps to 53-135 (RQRFRGFRYP…VLLEYLERQL (83 aa)). Residues Lys-178 and Lys-222 each participate in a glycyl lysine isopeptide (Lys-Gly) (interchain with G-Cter in SUMO2) cross-link. One can recognise a KRAB domain in the interval 221-317 (LKMEDVALTL…QRKQKNAIGS (97 aa)). C2H2-type zinc fingers lie at residues 320–342 (HYCHECGKSFAQSSGLTKHRRIH), 348–370 (YECEDCGKTFIGSSALVIHQRVH), 376–398 (YECEECGKVFSHSSNLIKHQRTH), 404–426 (YECDDCGKTFSQSCSLLEHHKIH), and 432–454 (YQCNMCGKAFRRNSHLLRHQRIH). The span at 455 to 467 (GDKNVQNPEHGES) shows a compositional bias: basic and acidic residues. Residues 455 to 480 (GDKNVQNPEHGESWESQGRTESQWEN) form a disordered region. Polar residues predominate over residues 468–480 (WESQGRTESQWEN). 2 C2H2-type zinc fingers span residues 487 to 509 (YKCNECERSFTRNRSLIEHQKIH) and 515 to 537 (YQCDTCGKGFTRTSYLVQHQRSH).

It belongs to the krueppel C2H2-type zinc-finger protein family. Expressed in adult heart, brain, placenta, lung and kidney, but not in adult liver and skeletal muscle. In 17-day old embryo, detected in liver, skeletal muscle, brain, heart and small intestine.

The protein resides in the nucleus. Its function is as follows. May be involved in the transcriptional activation of MDM2 and EP300 genes. This is Zinc finger protein with KRAB and SCAN domains 4 (ZKSCAN4) from Homo sapiens (Human).